Consider the following 208-residue polypeptide: ATP-dependent Clp protease proteolytic subunit (208 aa).

Residue serine 98 is the Nucleophile of the active site. Histidine 123 is a catalytic residue.

The protein belongs to the peptidase S14 family. Fourteen ClpP subunits assemble into 2 heptameric rings which stack back to back to give a disk-like structure with a central cavity, resembling the structure of eukaryotic proteasomes.

It localises to the cytoplasm. The catalysed reaction is Hydrolysis of proteins to small peptides in the presence of ATP and magnesium. alpha-casein is the usual test substrate. In the absence of ATP, only oligopeptides shorter than five residues are hydrolyzed (such as succinyl-Leu-Tyr-|-NHMec, and Leu-Tyr-Leu-|-Tyr-Trp, in which cleavage of the -Tyr-|-Leu- and -Tyr-|-Trp bonds also occurs).. In terms of biological role, cleaves peptides in various proteins in a process that requires ATP hydrolysis. Has a chymotrypsin-like activity. Plays a major role in the degradation of misfolded proteins. The sequence is that of ATP-dependent Clp protease proteolytic subunit from Wolbachia sp. subsp. Drosophila simulans (strain wRi).